Reading from the N-terminus, the 345-residue chain is Low-density lipoprotein receptor class A domain-containing protein 3 (345 aa).

The first 17 residues, 1 to 17 (MWLLGPLCLLLSSAAES), serve as a signal peptide directing secretion. Topologically, residues 18–173 (QLLPGNNFTN…NQLVYYPSIT (156 aa)) are extracellular. N-linked (GlcNAc...) asparagine glycosylation is present at Asn24. 3 consecutive LDL-receptor class A domains span residues 28 to 65 (ECNI…KECP), 70 to 107 (KCGP…ENCT), and 112 to 148 (LCST…ESCE). Cystine bridges form between Cys29–Cys42, Cys37–Cys55, Cys49–Cys64, Cys71–Cys84, Cys78–Cys97, Cys91–Cys106, Cys113–Cys125, Cys120–Cys138, and Cys132–Cys147. The interval 30-57 (NIPGNFMCSNGRCIPGAWQCDGLPDCFD) is (Microbial infection) Interaction with Venezuelan equine encephalitis virus/VEEV spike proteins E1 and E2. A helical membrane pass occupies residues 174–194 (YAIIGSSVIFVLVVALLALVL). The Cytoplasmic portion of the chain corresponds to 195–345 (HHQRKRNNLM…SEPSQGTEEV (151 aa)). 2 short sequence motifs (involved in ITCH interaction) span residues 256–259 (PPSY) and 275–278 (PPPY). A disordered region spans residues 270–345 (WYDLPPPPYS…SEPSQGTEEV (76 aa)). The segment covering 295 to 313 (SRSGSANSASSQAASSLLS) has biased composition (low complexity).

Belongs to the LDLR family. Interacts with APP precursor C-terminus. Interacts directly with ITCH; this interaction promotes ITCH auto-ubiquitination leading to its degradation. Interacts directly with NEDD4; this interaction promotes NEDD4 auto-ubiquitination. Interacts directly with NEDD4L. As to quaternary structure, (Microbial infection) Interacts (via domain LDL-receptor class A 1) with Venezuelan equine encephalitis virus/VEEV spike proteins E1 and E2. In terms of tissue distribution, expressed at high levels in brain, lung, skeletal muscle, and pancreas. Expressed at moderate levels in heart, placenta, and kidney but not detected in the liver.

It localises to the cell membrane. Functionally, may influence APP processing, resulting in a decrease in sAPP-alpha production and increased amyloidogenic P3 peptide production. May regulate ITCH and NEDD4 E3 ligase activity and degradation. In terms of biological role, (Microbial infection) Acts as a receptor for Venezuelan equine encephalitis virus. This Homo sapiens (Human) protein is Low-density lipoprotein receptor class A domain-containing protein 3.